A 176-amino-acid polypeptide reads, in one-letter code: Macro domain-containing protein LMOf2365_2748 (176 aa).

Residues Met-1–Val-175 enclose the Macro domain.

It belongs to the MacroD-type family.

This is Macro domain-containing protein LMOf2365_2748 from Listeria monocytogenes serotype 4b (strain F2365).